Reading from the N-terminus, the 1939-residue chain is Myosin-6 (1939 aa).

The Myosin N-terminal SH3-like domain maps to 32–81 (DIRTECFVPDDKEEFVKAKILSREGGKVIAETENGKTVTVKEDQVLQQNP). Residues 85–780 (DKIEDMAMLT…LLGLLEEMRD (696 aa)) enclose the Myosin motor domain. An N6,N6,N6-trimethyllysine modification is found at K129. 178–185 (GESGAGKT) is a binding site for ATP. T379 is modified (phosphothreonine). Position 417 is a phosphoserine (S417). Actin-binding stretches follow at residues 657 to 679 (LNKL…IPNE) and 759 to 773 (KFGH…GLLG). The 30-residue stretch at 783 to 812 (LSRIITRMQAQARGQLMRIEFKKIVERRDA) folds into the IQ domain. The stretch at 842-1939 (LKSAETEKEM…GAKQKMHDEE (1098 aa)) forms a coiled coil. Position 1139 is a phosphoserine (S1139). Y1261 is modified (phosphotyrosine). S1271 is subject to Phosphoserine. T1277 and T1284 each carry phosphothreonine. S1309 bears the Phosphoserine mark. A Phosphotyrosine modification is found at Y1310. T1311 is modified (phosphothreonine). At S1512 the chain carries Phosphoserine. T1515 is modified (phosphothreonine). Composition is skewed to basic and acidic residues over residues 1826–1837 (GELEAEQKRNAE) and 1925–1939 (KSRD…HDEE). 2 disordered regions span residues 1826-1849 (GELE…ERRI) and 1909-1939 (EERA…HDEE).

This sequence belongs to the TRAFAC class myosin-kinesin ATPase superfamily. Myosin family. As to quaternary structure, muscle myosin is a hexameric protein that consists of 2 heavy chain subunits (MHC), 2 alkali light chain subunits (MLC) and 2 regulatory light chain subunits (MLC-2).

Its subcellular location is the cytoplasm. The protein localises to the myofibril. In terms of biological role, muscle contraction. This Homo sapiens (Human) protein is Myosin-6 (MYH6).